We begin with the raw amino-acid sequence, 333 residues long: Succinylglutamate desuccinylase (333 aa).

Positions 56, 59, and 149 each coordinate Zn(2+). Glu-214 is a catalytic residue.

This sequence belongs to the AspA/AstE family. Succinylglutamate desuccinylase subfamily. It depends on Zn(2+) as a cofactor.

The enzyme catalyses N-succinyl-L-glutamate + H2O = L-glutamate + succinate. It functions in the pathway amino-acid degradation; L-arginine degradation via AST pathway; L-glutamate and succinate from L-arginine: step 5/5. Functionally, transforms N(2)-succinylglutamate into succinate and glutamate. The chain is Succinylglutamate desuccinylase from Chromobacterium violaceum (strain ATCC 12472 / DSM 30191 / JCM 1249 / CCUG 213 / NBRC 12614 / NCIMB 9131 / NCTC 9757 / MK).